A 166-amino-acid polypeptide reads, in one-letter code: MFDGIGFMELLLIGVLGLVVLGPERLPVAVRSITSWIRAMKRMANSVKEELEQELKIEQLHADLKKAESKGLSNLSPELKESIEQLKQAAQSVNRPYQVQDPVKDTPAPENQIHSPVASTVQTSPAQASQANPTATVEASPTSASPATPSEPSQGADTRSNPKANG.

The chain crosses the membrane as a helical span at residues 2-22; it reads FDGIGFMELLLIGVLGLVVLG. Residues 69 to 166 form a disordered region; the sequence is SKGLSNLSPE…DTRSNPKANG (98 aa). Composition is skewed to polar residues over residues 88-97 and 112-132; these read QAAQSVNRPY and QIHS…SQAN. Over residues 133 to 153 the composition is skewed to low complexity; it reads PTATVEASPTSASPATPSEPS. Residues 155 to 166 show a composition bias toward polar residues; sequence GADTRSNPKANG.

The protein belongs to the TatB family. In terms of assembly, the Tat system comprises two distinct complexes: a TatABC complex, containing multiple copies of TatA, TatB and TatC subunits, and a separate TatA complex, containing only TatA subunits. Substrates initially bind to the TatABC complex, which probably triggers association of the separate TatA complex to form the active translocon.

It localises to the cell inner membrane. Its function is as follows. Part of the twin-arginine translocation (Tat) system that transports large folded proteins containing a characteristic twin-arginine motif in their signal peptide across membranes. Together with TatC, TatB is part of a receptor directly interacting with Tat signal peptides. TatB may form an oligomeric binding site that transiently accommodates folded Tat precursor proteins before their translocation. This Shewanella baltica (strain OS223) protein is Sec-independent protein translocase protein TatB.